A 103-amino-acid chain; its full sequence is Small ribosomal subunit protein uS10 (103 aa).

The protein belongs to the universal ribosomal protein uS10 family. In terms of assembly, part of the 30S ribosomal subunit.

Functionally, involved in the binding of tRNA to the ribosomes. The polypeptide is Small ribosomal subunit protein uS10 (Shewanella halifaxensis (strain HAW-EB4)).